Reading from the N-terminus, the 131-residue chain is MSRGFGREKRLLTPRQFKAVFDSPSGKVPGRNVLLLARENDLQHPRLGLVIGKKSVKLSVERNRIKRQIRETFRHHQLELAGWDIVIIARKGLADLDNPELAKQFAKLWKRLSRNPAKTAAEPGAANNTHA.

It belongs to the RnpA family. As to quaternary structure, consists of a catalytic RNA component (M1 or rnpB) and a protein subunit.

The enzyme catalyses Endonucleolytic cleavage of RNA, removing 5'-extranucleotides from tRNA precursor.. Its function is as follows. RNaseP catalyzes the removal of the 5'-leader sequence from pre-tRNA to produce the mature 5'-terminus. It can also cleave other RNA substrates such as 4.5S RNA. The protein component plays an auxiliary but essential role in vivo by binding to the 5'-leader sequence and broadening the substrate specificity of the ribozyme. This is Ribonuclease P protein component from Stutzerimonas stutzeri (strain A1501) (Pseudomonas stutzeri).